A 143-amino-acid chain; its full sequence is Large ribosomal subunit protein uL15 (143 aa).

The segment at 1–51 is disordered; sequence MELNGIKPAAGAKHAKRRVGRGIGSGIGKTAGRGHKGQKSRAGGFHKVGFE. A compositionally biased stretch (gly residues) spans 21 to 31; the sequence is RGIGSGIGKTA.

Belongs to the universal ribosomal protein uL15 family. As to quaternary structure, part of the 50S ribosomal subunit.

In terms of biological role, binds to the 23S rRNA. This is Large ribosomal subunit protein uL15 from Variovorax paradoxus (strain S110).